We begin with the raw amino-acid sequence, 156 residues long: Deoxyuridine 5'-triphosphate nucleotidohydrolase (156 aa).

Substrate-binding positions include 76-78 (RSG), Asn89, 93-95 (TVD), and Lys103.

Belongs to the dUTPase family. Requires Mg(2+) as cofactor.

It catalyses the reaction dUTP + H2O = dUMP + diphosphate + H(+). It functions in the pathway pyrimidine metabolism; dUMP biosynthesis; dUMP from dCTP (dUTP route): step 2/2. This enzyme is involved in nucleotide metabolism: it produces dUMP, the immediate precursor of thymidine nucleotides and it decreases the intracellular concentration of dUTP so that uracil cannot be incorporated into DNA. The polypeptide is Deoxyuridine 5'-triphosphate nucleotidohydrolase (Rhizobium rhizogenes (strain K84 / ATCC BAA-868) (Agrobacterium radiobacter)).